An 84-amino-acid polypeptide reads, in one-letter code: U4-theraphotoxin-Hhn1a (84 aa).

Residues 1-22 (MKVTLIAILTCAAVLVLHTTAA) form the signal peptide. A propeptide spanning residues 23–47 (EELEESQLMEVGMPDTELEAVDEER) is cleaved from the precursor. 3 disulfide bridges follow: cysteine 51–cysteine 65, cysteine 55–cysteine 76, and cysteine 70–cysteine 81.

This sequence belongs to the neurotoxin 12 (Hwtx-2) family. 02 (Hwtx-2) subfamily. In terms of tissue distribution, expressed by the venom gland.

The protein resides in the secreted. Its function is as follows. Postsynaptic neurotoxin. This Cyriopagopus hainanus (Chinese bird spider) protein is U4-theraphotoxin-Hhn1a.